The sequence spans 1496 residues: DENN domain-containing protein 4B (1496 aa).

The MABP domain occupies 44-203; it reads AEPITDVAVI…AVYLCYKVGL (160 aa). One can recognise a uDENN domain in the interval 195 to 369; the sequence is VYLCYKVGLA…NVPFPSPQRP (175 aa). The cDENN domain occupies 390-526; the sequence is PLPLSGASFL…PYKVLLATLT (137 aa). The dDENN domain maps to 528 to 644; it reads LYQQLDQTYT…ECSFGSARHA (117 aa). The interval 720–744 is disordered; it reads QPGALPVPGPSRSAPSSPAPRRTKQ. Positions 729–739 are enriched in low complexity; that stretch reads PSRSAPSSPAP. 2 PPR repeats span residues 775–811 and 812–846; these read WFLC…VVLP and DEVC…GIVP. Disordered stretches follow at residues 891–970, 995–1055, 1067–1119, and 1205–1227; these read LRER…ARGA, VPWH…TPRR, PSRH…GSEW, and SRPS…PVPG. Low complexity predominate over residues 896–912; it reads QQQQQQQQQQQQQQQEQ. Polar residues-rich tracts occupy residues 913–924 and 935–944; these read VSAHQEAGSSQA and RPLQRQTTWA. Phosphoserine is present on serine 953. Over residues 1075–1090 the composition is skewed to pro residues; the sequence is RIPPPELPPDLPPPAR. The residue at position 1092 (serine 1092) is a Phosphoserine. Over residues 1105-1119 the composition is skewed to low complexity; sequence GSTASESSASLGSEW.

Its subcellular location is the golgi apparatus. Guanine nucleotide exchange factor (GEF) which may activate RAB10. Promotes the exchange of GDP to GTP, converting inactive GDP-bound Rab proteins into their active GTP-bound form. This is DENN domain-containing protein 4B (DENND4B) from Homo sapiens (Human).